Reading from the N-terminus, the 397-residue chain is Succinate--CoA ligase [ADP-forming] subunit beta (397 aa).

An ATP-grasp domain is found at 9–254 (KELLRGYGAP…TSEEDEKEIE (246 aa)). ATP-binding positions include Lys46, 53–55 (GRG), Glu109, Ala112, and Glu117. Mg(2+) contacts are provided by Asn209 and Asp223. Residues Asn274 and 331–333 (GIM) contribute to the substrate site.

It belongs to the succinate/malate CoA ligase beta subunit family. Heterotetramer of two alpha and two beta subunits. It depends on Mg(2+) as a cofactor.

It catalyses the reaction succinate + ATP + CoA = succinyl-CoA + ADP + phosphate. The enzyme catalyses GTP + succinate + CoA = succinyl-CoA + GDP + phosphate. It participates in carbohydrate metabolism; tricarboxylic acid cycle; succinate from succinyl-CoA (ligase route): step 1/1. Succinyl-CoA synthetase functions in the citric acid cycle (TCA), coupling the hydrolysis of succinyl-CoA to the synthesis of either ATP or GTP and thus represents the only step of substrate-level phosphorylation in the TCA. The beta subunit provides nucleotide specificity of the enzyme and binds the substrate succinate, while the binding sites for coenzyme A and phosphate are found in the alpha subunit. The polypeptide is Succinate--CoA ligase [ADP-forming] subunit beta (Chelativorans sp. (strain BNC1)).